Here is a 1401-residue protein sequence, read N- to C-terminus: Kinesin-like protein KIF27 (1401 aa).

In terms of domain architecture, Kinesin motor spans 5–341 (PVKVAVRIRP…LKYANRARNI (337 aa)). 84–91 (GQTGSGKT) is an ATP binding site. 2 coiled-coil regions span residues 352 to 413 (ESDR…GYQC) and 489 to 557 (LAAD…KLNL). 5 positions are modified to phosphoserine: serine 643, serine 646, serine 672, serine 675, and serine 704. Residues 643–662 (SDNSDDEESEGQEKSGTRCR) form a disordered region. Coiled-coil stretches lie at residues 705–886 (QELN…IQLK), 916–1070 (DHLQ…AAIE), 1118–1154 (NKVVNLREAERKQQLYNEEMKMKVLERDNMVRELESA), and 1190–1219 (EGIMETFKTYEDKIQQLEKDLYFYKKTSRD). At serine 999 the chain carries Phosphoserine. Over residues 1259–1280 (EELKWASRPESMKLSGREREMD) the composition is skewed to basic and acidic residues. Residues 1259 to 1332 (EELKWASRPE…TETDDNQFTK (74 aa)) are disordered. Polar residues predominate over residues 1281–1292 (SSASSLRTQPNP). 2 positions are modified to phosphoserine: serine 1367 and serine 1389.

The protein belongs to the TRAFAC class myosin-kinesin ATPase superfamily. Kinesin family. KIF27 subfamily. Interacts with STK36. As to expression, testis, pancreatic islet, germ cell tumors and Jurkat T-cells.

Its subcellular location is the cytoplasm. It localises to the cytoskeleton. The protein resides in the cell projection. The protein localises to the cilium. In terms of biological role, plays an essential role in motile ciliogenesis. This Homo sapiens (Human) protein is Kinesin-like protein KIF27 (KIF27).